The primary structure comprises 1020 residues: Vacuolar membrane protease (1020 aa).

Over 1-11 (MKCHNPFGFRV) the chain is Cytoplasmic. A helical transmembrane segment spans residues 12 to 32 (GPVTFWTIIIYLALLVPLLWI). At 33–410 (HETVPPAPSS…GFAVFGLRGL (378 aa)) the chain is on the vacuolar side. N-linked (GlcNAc...) asparagine glycans are attached at residues asparagine 50, asparagine 94, and asparagine 130. Zn(2+) is bound by residues histidine 191 and aspartate 203. The active-site Proton acceptor is glutamate 237. The Zn(2+) site is built by glutamate 238, glutamate 263, and histidine 336. Residues 411–431 (FAWSLTLLIVSPLILAILVFI) form a helical membrane-spanning segment. The Cytoplasmic portion of the chain corresponds to 432–467 (LNRHDKLYFFSRKINVHNEGSEDPVSIGGFRGFTRF). Residues 468–488 (PIAVGFSGALTLASAFLLTKI) traverse the membrane as a helical segment. Over 489–491 (NPM) the chain is Vacuolar. The chain crosses the membrane as a helical span at residues 492 to 512 (IVYSSEYAVWGMMLSLFYVSL). At 513–529 (WMTLKGSSAVRPSALQR) the chain is on the cytoplasmic side. A helical membrane pass occupies residues 530-550 (GYIHIWLFIVSWGLLIVVAVT). The Vacuolar portion of the chain corresponds to 551-561 (EDRLKIASGYP). Residues 562–582 (VVFLHSALFLSTVISFLELFG) traverse the membrane as a helical segment. At 583–690 (LTKKHDYARR…RLPGWTWILQ (108 aa)) the chain is on the cytoplasmic side. The segment at 609–648 (DDALIAPDTPNDEAEDSDGEDSEHEPTETTPLRAGGDSRV) is disordered. The segment covering 618 to 631 (PNDEAEDSDGEDSE) has biased composition (acidic residues). A helical membrane pass occupies residues 691 to 711 (FLLLAPINVILWGQIGLFAVA). Residues 712 to 724 (ATQAGGADGGSVL) lie on the Vacuolar side of the membrane. Residues 725 to 745 (TTYLIIAVLSIVILVPLAPFI) form a helical membrane-spanning segment. Residues 746–750 (HRVHY) are Cytoplasmic-facing. The helical transmembrane segment at 751-771 (YVPIILFAAFAGTLIYNLIAF) threads the bilayer. Residues 772 to 1020 (PFSANNRYKI…VGLVRPVKRF (249 aa)) lie on the Vacuolar side of the membrane. Residues asparagine 851, asparagine 868, and asparagine 873 are each glycosylated (N-linked (GlcNAc...) asparagine).

The protein belongs to the peptidase M28 family. Zn(2+) serves as cofactor.

The protein resides in the vacuole membrane. Functionally, may be involved in vacuolar sorting and osmoregulation. In Verticillium alfalfae (strain VaMs.102 / ATCC MYA-4576 / FGSC 10136) (Verticillium wilt of alfalfa), this protein is Vacuolar membrane protease.